The primary structure comprises 331 residues: Probable serine hydrolase (331 aa).

Residues 1 to 28 are disordered; it reads MGQTRVAATTAAQSPAAELSPETNGQTE. Over residues 7-17 the composition is skewed to low complexity; sequence AATTAAQSPAA. Positions 63–163 constitute an AB hydrolase-1 domain; the sequence is PIIALHGWQD…EVEKLINIDI (101 aa). Residue S138 is part of the active site.

This sequence belongs to the AB hydrolase superfamily. As to expression, ubiquitously expressed before embryonic stage 11. At stage 11, expression is concentrated in the foregut and posterior midgut. By stage 15, in gastric caeca, pharynx, posterior spiracles and anterior edge of midgut. At the end of embryogenesis, expression is confined to gastric caeca. During third instar larvae, expressed at low levels in gastric caeca, midgut and hindgut and high level in fat body.

Functionally, may have a role in detoxification and digestion during embryogenesis and larval development. The chain is Probable serine hydrolase (kraken) from Drosophila melanogaster (Fruit fly).